Consider the following 380-residue polypeptide: Deoxyguanosinetriphosphate triphosphohydrolase-like protein (380 aa).

The disordered stretch occupies residues 1 to 28; the sequence is MYAPYATMPDRSRGRAVPEEESSFRSPF. The HD domain occupies 62–198; the sequence is RLTHSIEVGQ…AALADDIAYN (137 aa).

The protein belongs to the dGTPase family. Type 2 subfamily.

In Ruegeria sp. (strain TM1040) (Silicibacter sp.), this protein is Deoxyguanosinetriphosphate triphosphohydrolase-like protein.